Consider the following 184-residue polypeptide: Ras-related protein Rap-1A (184 aa).

GTP-binding positions include 10 to 18 (GSGGVGKSA), 29 to 35 (VEKYDPT), G60, and 116 to 119 (NKCD). The short motif at 32–40 (YDPTIEDSY) is the Effector region element. Cysteine methyl ester is present on C181. Residue C181 is the site of S-geranylgeranyl cysteine attachment. The propeptide at 182 to 184 (LLL) is removed in mature form.

It belongs to the small GTPase superfamily. Ras family. Found in a complex, at least composed of ITGB1BP1, KRIT1 and RAP1A. Interacts (active GTP-bound form preferentially) with KRIT1 (via C-terminus FERM domain); the interaction does not induce the opening conformation of KRIT1. Found in a complex composed of CDH1, RAP1A and PKP3; PKP3 acts as a scaffold protein within the complex, the complex is required for CDH1 localization to mature desmosome cell junctions. In its GTP-bound form interacts with PLCE1 and RADIL. Interacts with SGSM1, SGSM2 and SGSM3. Interacts (via GTP-bound active form) with RAPGEF2 (via Ras-associating domain). Interacts with TBC1D21. Interacts with RAP1GDS1.

The protein localises to the cell membrane. Its subcellular location is the cytoplasm. The protein resides in the perinuclear region. It is found in the cell junction. It localises to the early endosome. The catalysed reaction is GTP + H2O = GDP + phosphate + H(+). Activated by guanine nucleotide-exchange factors (GEF) EPAC and EPAC2 in a cAMP-dependent manner, and GFR. Functionally, counteracts the mitogenic function of Ras, at least partly because it can interact with Ras GAPs and RAF in a competitive manner. Together with ITGB1BP1, regulates KRIT1 localization to microtubules and membranes. Plays a role in nerve growth factor (NGF)-induced neurite outgrowth. Plays a role in the regulation of embryonic blood vessel formation. Involved in the establishment of basal endothelial barrier function. Facilitates the progressive accumulation of CDH1 at mature desmosome junctions via cAMP-dependent signaling and its interaction with PKP3. May be involved in the regulation of the vascular endothelial growth factor receptor KDR expression at endothelial cell-cell junctions. The protein is Ras-related protein Rap-1A (RAP1A) of Bos taurus (Bovine).